The chain runs to 321 residues: Glucokinase (321 aa).

8–13 (GDVGGT) provides a ligand contact to ATP.

The protein belongs to the bacterial glucokinase family.

The protein resides in the cytoplasm. The enzyme catalyses D-glucose + ATP = D-glucose 6-phosphate + ADP + H(+). The sequence is that of Glucokinase from Salmonella agona (strain SL483).